Consider the following 165-residue polypeptide: MDSSRARQQLRRRFLLLPDAEAQLDREGDAGPETSTAVEKKEKPLPRLNIHSGFWILASIVVTYYVDFFKTLKENFHTSSWFLCGSALLLVSLSIAFYCIVYLEWYCGIGEYDVKYPALIPITTASFIAAGICFNIALWHVWSFFTPLLLFTQFMGVVMFITLLG.

4 helical membrane-spanning segments follow: residues Asn49 to Phe69, Trp81 to Val101, Leu119 to Trp139, and Phe144 to Leu164.

Its subcellular location is the membrane. This Homo sapiens (Human) protein is Transmembrane protein 128 (TMEM128).